The following is a 126-amino-acid chain: Ribosome-binding factor A (126 aa).

This sequence belongs to the RbfA family. Monomer. Binds 30S ribosomal subunits, but not 50S ribosomal subunits or 70S ribosomes.

It is found in the cytoplasm. One of several proteins that assist in the late maturation steps of the functional core of the 30S ribosomal subunit. Associates with free 30S ribosomal subunits (but not with 30S subunits that are part of 70S ribosomes or polysomes). Required for efficient processing of 16S rRNA. May interact with the 5'-terminal helix region of 16S rRNA. The sequence is that of Ribosome-binding factor A from Clostridioides difficile (strain 630) (Peptoclostridium difficile).